Here is a 931-residue protein sequence, read N- to C-terminus: Netrin receptor UNC5C (931 aa).

The first 40 residues, 1 to 40, serve as a signal peptide directing secretion; that stretch reads MRKGLRATAARCGLGLGYLLQMLVLPALALLSASGTGSAA. Over 41–380 the chain is Extracellular; it reads QDDEFFHELP…APDSDDVALY (340 aa). An Ig-like domain is found at 62–159; that stretch reads PHFLIEPEEA…AGTTKSRKAY (98 aa). Intrachain disulfides connect C83–C144, C95–C142, C188–C239, C272–C309, C276–C313, C287–C299, C328–C362, C332–C367, and C340–C352. The region spanning 161 to 256 is the Ig-like C2-type domain; that stretch reads RIAYLRKTFE…KRKSTTATVI (96 aa). A glycan (N-linked (GlcNAc...) asparagine) is linked at N236. 2 TSP type-1 domains span residues 260-314 and 316-368; these read NGGW…TLCP and DGRW…GLCM. N361 carries an N-linked (GlcNAc...) asparagine glycan. Residues 381-401 traverse the membrane as a helical segment; that stretch reads VGIVIAVTVCLAITVVVALFV. Over 402–931 the chain is Cytoplasmic; the sequence is YRKNHRDFES…VVSLAAEGQY (530 aa). Positions 402–931 are required for netrin-mediated axon repulsion of neuronal growth cones; sequence YRKNHRDFES…VVSLAAEGQY (530 aa). S502 is subject to Phosphoserine. The region spanning 530-673 is the ZU5 domain; it reads CTAFGTFNSL…LSTYALVGQS (144 aa). Position 568 is a phosphotyrosine (Y568). The interval 694 to 712 is interaction with DCC; that stretch reads SLEYSIRVYCLDDTQDALK. A Death domain is found at 850–929; it reads QKLCSSLDAP…ETVVSLAAEG (80 aa).

Belongs to the unc-5 family. In terms of assembly, interacts with DCC (via cytoplasmic domain). Interacts (tyrosine phosphorylated form) with PTPN11. Interacts (via extracellular domain) with FLRT3 (via extracellular domain). Interacts (via Ig-like C2-type domain) with DSCAM (via extracellular domain). Interacts (via death domain) with DAPK1. Interacts (via cytoplasmic domain) with TUBB3; this interaction is decreased by NTN1/Netrin-1. In terms of processing, phosphorylated on different cytoplasmic tyrosine residues. Phosphorylation of Tyr-568 leads to an interaction with PTPN11 phosphatase, suggesting that its activity is regulated by phosphorylation/dephosphorylation. Tyrosine phosphorylation is netrin-dependent. Proteolytically cleaved by caspases during apoptosis. The cleavage does not take place when the receptor is associated with netrin ligand. Its cleavage by caspases is required to induce apoptosis. Expressed in cortical and cerebellar neurons, including cells of the external and internal granular layer and of the Purkinje cell layer (at protein level). Mainly expressed in regions of differentiating neurons. Highly expressed in brain and lung. Expressed in the cerebellum and the neurons of the hippocampus, with enrichment in neurons of the CA3 hippocampal pyramidal layer. Weakly expressed in testis, ovary, spleen, thymus and bladder. Expressed at very low level in kidney, intestine and salivary gland.

The protein localises to the cell membrane. It localises to the cell surface. The protein resides in the synapse. It is found in the synaptosome. Its subcellular location is the cell projection. The protein localises to the dendrite. It localises to the axon. The protein resides in the growth cone. It is found in the lamellipodium. Its subcellular location is the filopodium. Its function is as follows. Receptor for netrin required for axon guidance. Mediates axon repulsion of neuronal growth cones in the developing nervous system upon ligand binding. NTN1/Netrin-1 binding might cause dissociation of UNC5C from polymerized TUBB3 in microtubules and thereby lead to increased microtubule dynamics and axon repulsion. Axon repulsion in growth cones may also be caused by its association with DCC that may trigger signaling for repulsion. Might also collaborate with DSCAM in NTN1-mediated axon repulsion independently of DCC. Also involved in corticospinal tract axon guidance independently of DCC. Involved in dorsal root ganglion axon projection towards the spinal cord. It also acts as a dependence receptor required for apoptosis induction when not associated with netrin ligand. The sequence is that of Netrin receptor UNC5C (Unc5c) from Mus musculus (Mouse).